A 164-amino-acid chain; its full sequence is OV-17 antigen (164 aa).

The first 16 residues, 1-16 (MKFVILLTIGLLVVAA), serve as a signal peptide directing secretion. The segment at 24–43 (QQQQQQQQQRDEREIPPFLE) is disordered.

It belongs to the SXP/RAL-2 family. High levels in the hypodermal layer of the adult female.

This is OV-17 antigen (OV17) from Onchocerca volvulus.